The sequence spans 341 residues: tRNA N6-adenosine threonylcarbamoyltransferase (341 aa).

Residues histidine 111 and histidine 115 each coordinate Fe cation. Substrate contacts are provided by residues 133-137, aspartate 166, glycine 179, aspartate 183, and asparagine 273; that span reads AVSGG. A Fe cation-binding site is contributed by aspartate 301.

This sequence belongs to the KAE1 / TsaD family. Requires Fe(2+) as cofactor.

It localises to the cytoplasm. The enzyme catalyses L-threonylcarbamoyladenylate + adenosine(37) in tRNA = N(6)-L-threonylcarbamoyladenosine(37) in tRNA + AMP + H(+). Functionally, required for the formation of a threonylcarbamoyl group on adenosine at position 37 (t(6)A37) in tRNAs that read codons beginning with adenine. Is involved in the transfer of the threonylcarbamoyl moiety of threonylcarbamoyl-AMP (TC-AMP) to the N6 group of A37, together with TsaE and TsaB. TsaD likely plays a direct catalytic role in this reaction. In Geotalea daltonii (strain DSM 22248 / JCM 15807 / FRC-32) (Geobacter daltonii), this protein is tRNA N6-adenosine threonylcarbamoyltransferase.